Reading from the N-terminus, the 71-residue chain is Small ribosomal subunit protein bS18 (71 aa).

It belongs to the bacterial ribosomal protein bS18 family. As to quaternary structure, part of the 30S ribosomal subunit. Forms a tight heterodimer with protein bS6.

In terms of biological role, binds as a heterodimer with protein bS6 to the central domain of the 16S rRNA, where it helps stabilize the platform of the 30S subunit. The protein is Small ribosomal subunit protein bS18 of Dichelobacter nodosus (strain VCS1703A).